The following is a 365-amino-acid chain: tRNA-specific 2-thiouridylase MnmA (365 aa).

Residues 14 to 21 and Leu40 contribute to the ATP site; that span reads AMSGGVDS. Catalysis depends on Cys108, which acts as the Nucleophile. Residues Cys108 and Cys204 are joined by a disulfide bond. Gly132 provides a ligand contact to ATP. Residues 154-156 form an interaction with tRNA region; that stretch reads KDQ. Cys204 serves as the catalytic Cysteine persulfide intermediate.

This sequence belongs to the MnmA/TRMU family.

The protein localises to the cytoplasm. The catalysed reaction is S-sulfanyl-L-cysteinyl-[protein] + uridine(34) in tRNA + AH2 + ATP = 2-thiouridine(34) in tRNA + L-cysteinyl-[protein] + A + AMP + diphosphate + H(+). Functionally, catalyzes the 2-thiolation of uridine at the wobble position (U34) of tRNA, leading to the formation of s(2)U34. The polypeptide is tRNA-specific 2-thiouridylase MnmA (Rickettsia peacockii (strain Rustic)).